The sequence spans 429 residues: Adenylosuccinate synthetase (429 aa).

GTP is bound by residues 12–18 and 40–42; these read GDEGKGK and GHT. Asp13 functions as the Proton acceptor in the catalytic mechanism. Residues Asp13 and Gly40 each coordinate Mg(2+). IMP is bound by residues 13-16, 38-41, Thr129, Arg143, Gln224, Thr239, and Arg303; these read DEGK and NAGH. Residue His41 is the Proton donor of the active site. Substrate is bound at residue 299 to 305; that stretch reads VTTGRAR. Residues Arg305, 331 to 333, and 413 to 415 contribute to the GTP site; these read KLD and GVG.

This sequence belongs to the adenylosuccinate synthetase family. In terms of assembly, homodimer. Requires Mg(2+) as cofactor.

The protein localises to the cytoplasm. The catalysed reaction is IMP + L-aspartate + GTP = N(6)-(1,2-dicarboxyethyl)-AMP + GDP + phosphate + 2 H(+). The protein operates within purine metabolism; AMP biosynthesis via de novo pathway; AMP from IMP: step 1/2. Functionally, plays an important role in the de novo pathway of purine nucleotide biosynthesis. Catalyzes the first committed step in the biosynthesis of AMP from IMP. The chain is Adenylosuccinate synthetase from Rhodococcus erythropolis (strain PR4 / NBRC 100887).